Reading from the N-terminus, the 406-residue chain is UPF0754 membrane protein SYNPCC7002_A1087 (406 aa).

A helical membrane pass occupies residues 384-404 (IVNLGGVLGFLVGVAQSVILL).

Belongs to the UPF0754 family.

It localises to the cell inner membrane. The sequence is that of UPF0754 membrane protein SYNPCC7002_A1087 from Picosynechococcus sp. (strain ATCC 27264 / PCC 7002 / PR-6) (Agmenellum quadruplicatum).